We begin with the raw amino-acid sequence, 175 residues long: uncharacterized protein (175 aa).

The DNL-type zinc-finger motif lies at 71–166 (QPKPTYNVSF…KPPQFKIRPA (96 aa)). Zn(2+)-binding residues include Cys-82, Cys-85, Cys-107, and Cys-110.

This is an uncharacterized protein from Schizosaccharomyces pombe (strain 972 / ATCC 24843) (Fission yeast).